The sequence spans 398 residues: Enoyl-[acyl-carrier-protein] reductase [NADH] (398 aa).

NAD(+)-binding positions include 48 to 53, 74 to 75, 111 to 112, and 139 to 140; these read GASTGY, FE, DA, and LA. A substrate-binding site is contributed by Tyr225. Tyr235 (proton donor) is an active-site residue. NAD(+) is bound by residues Lys244 and 273–275; that span reads VVT.

The protein belongs to the TER reductase family. Monomer.

It carries out the reaction a 2,3-saturated acyl-[ACP] + NAD(+) = a (2E)-enoyl-[ACP] + NADH + H(+). The protein operates within lipid metabolism; fatty acid biosynthesis. Functionally, involved in the final reduction of the elongation cycle of fatty acid synthesis (FAS II). Catalyzes the reduction of a carbon-carbon double bond in an enoyl moiety that is covalently linked to an acyl carrier protein (ACP). This Pseudomonas fluorescens (strain ATCC BAA-477 / NRRL B-23932 / Pf-5) protein is Enoyl-[acyl-carrier-protein] reductase [NADH].